A 154-amino-acid polypeptide reads, in one-letter code: MEIIKDIVSLIASILIFLGSIIALISAIGIVKFQDVFLRSHASTKSSTLSVLLTVVGVLIYFIVNSGFFSVRLLLSLVFINLTSPVGMHLISRAAYRNGAYMYRKDDASRQSTILLSQKEFNTPEELKKRAKLREERREKLYYKEKEYINKMDD.

3 helical membrane-spanning segments follow: residues 11 to 31, 51 to 71, and 72 to 92; these read IASI…IGIV, VLLT…FFSV, and RLLL…HLIS.

This sequence belongs to the CPA3 antiporters (TC 2.A.63) subunit G family. In terms of assembly, may form a heterooligomeric complex that consists of seven subunits: mnhA2, mnhB2, mnhC2, mnhD2, mnhE2, mnhF2 and mnhG2.

It is found in the cell membrane. The polypeptide is Putative antiporter subunit mnhG2 (mnhG2) (Staphylococcus epidermidis (strain ATCC 35984 / DSM 28319 / BCRC 17069 / CCUG 31568 / BM 3577 / RP62A)).